The sequence spans 332 residues: Formamidase (332 aa).

In terms of domain architecture, CN hydrolase spans 14 to 259; the sequence is FLTALIQYPV…WEIVTAEVYP (246 aa). Glutamate 60 serves as the catalytic Proton acceptor. Lysine 132 acts as the Proton donor in catalysis. Catalysis depends on cysteine 165, which acts as the Nucleophile.

It belongs to the carbon-nitrogen hydrolase superfamily. Aliphatic amidase family.

It carries out the reaction formamide + H2O = formate + NH4(+). Its function is as follows. Is an aliphatic amidase with a restricted substrate specificity, as it only hydrolyzes formamide. This is Formamidase from Bacillus thuringiensis (strain Al Hakam).